Reading from the N-terminus, the 370-residue chain is Homospermidine synthase (370 aa).

This sequence belongs to the deoxyhypusine synthase family. Homotetramer. The cofactor is NAD(+).

It carries out the reaction putrescine + spermidine = sym-homospermidine + propane-1,3-diamine. The protein operates within alkaloid biosynthesis; pyrrolizidine alkaloid biosynthesis. In terms of biological role, catalyzes the transfer of an aminobutyl unit from spermidine onto putrescine. The resulting polyamine homospermidine is a precursor in the biosynthesis of pyrrolizidine alkaloids. The sequence is that of Homospermidine synthase (HSS1) from Senecio vulgaris (Common groundsel).